We begin with the raw amino-acid sequence, 121 residues long: Large ribosomal subunit protein bL12 (121 aa).

Belongs to the bacterial ribosomal protein bL12 family. As to quaternary structure, homodimer. Part of the ribosomal stalk of the 50S ribosomal subunit. Forms a multimeric L10(L12)X complex, where L10 forms an elongated spine to which 2 to 4 L12 dimers bind in a sequential fashion. Binds GTP-bound translation factors.

Forms part of the ribosomal stalk which helps the ribosome interact with GTP-bound translation factors. Is thus essential for accurate translation. This Shewanella piezotolerans (strain WP3 / JCM 13877) protein is Large ribosomal subunit protein bL12.